The chain runs to 539 residues: Dihydrolipoyllysine-residue acetyltransferase component 3 of pyruvate dehydrogenase complex, mitochondrial (539 aa).

A mitochondrion-targeting transit peptide spans 1–102 (MAYASRIINH…SCLMQSARGF (102 aa)). One can recognise a Lipoyl-binding domain in the interval 111 to 187 (HQEIGMPSLS…QVGEVIAITV (77 aa)). At Lys152 the chain carries N6-lipoyllysine. Residues 195 to 247 (KFKDYTPSSTADAAPTKAEPTPAPPKEEKVKQPSSPPEPKASKPSTPPTGDRV) form a disordered region. A compositionally biased stretch (low complexity) spans 204–214 (TADAAPTKAEP). Residues 248 to 285 (FASPLARKLAEDNNVPLSDIEGTGPEGRIVKADIDEYL) enclose the Peripheral subunit-binding (PSBD) domain. Active-site residues include His512 and Asp516.

Belongs to the 2-oxoacid dehydrogenase family. It depends on (R)-lipoate as a cofactor.

It localises to the mitochondrion matrix. The catalysed reaction is N(6)-[(R)-dihydrolipoyl]-L-lysyl-[protein] + acetyl-CoA = N(6)-[(R)-S(8)-acetyldihydrolipoyl]-L-lysyl-[protein] + CoA. Its function is as follows. The pyruvate dehydrogenase complex catalyzes the overall conversion of pyruvate to acetyl-CoA and CO(2). It contains multiple copies of three enzymatic components: pyruvate dehydrogenase (E1), dihydrolipoamide acetyltransferase (E2) and lipoamide dehydrogenase (E3). The protein is Dihydrolipoyllysine-residue acetyltransferase component 3 of pyruvate dehydrogenase complex, mitochondrial of Arabidopsis thaliana (Mouse-ear cress).